Consider the following 28-residue polypeptide: uncharacterized protein (28 aa).

A compositionally biased stretch (basic residues) spans 1–18; it reads MLPRKYKPAYKKQAHRVK. The segment at 1-28 is disordered; that stretch reads MLPRKYKPAYKKQAHRVKSNPQPAYTFQ. Positions 19–28 are enriched in polar residues; it reads SNPQPAYTFQ.

This is an uncharacterized protein from Saccharomyces cerevisiae (strain ATCC 204508 / S288c) (Baker's yeast).